The following is a 178-amino-acid chain: RNA-binding protein (178 aa).

Residues 113 to 178 (PKIGSKNKKT…KGKGKRGGKR (66 aa)) form a disordered region. Positions 168-178 (SKGKGKRGGKR) are enriched in basic residues.

This sequence belongs to the phytoreovirus RNA-binding protein family.

The protein resides in the host cytoplasm. In terms of biological role, constituent of viral factories. Binds to ssRNA and dsRNA. The chain is RNA-binding protein from Wound tumor virus (WTV).